Here is a 1276-residue protein sequence, read N- to C-terminus: Sterol regulatory element-binding protein cleavage-activating protein (1276 aa).

The Cytoplasmic portion of the chain corresponds to 1-18; sequence MTLTERLREKISQAFYNH. A helical membrane pass occupies residues 19–39; it reads GLLCASYPIPIILFTGLCILA. The Lumenal portion of the chain corresponds to 40-279; the sequence is CCYPLLKLPL…NLVHVHFKEE (240 aa). Positions 46–284 are loop-1; that stretch reads KLPLPGTGPV…HFKEEIGIAE (239 aa). The disordered stretch occupies residues 60-81; sequence PVKDYSPPPVDSDHKQGEPSEQ. N-linked (GlcNAc...) asparagine glycosylation is present at N263. Residues 280-300 form a helical membrane-spanning segment; sequence IGIAELIPLVTTYIILFAYIY. Positions 284 to 442 constitute an SSD domain; the sequence is ELIPLVTTYI…MFFFTTVLSI (159 aa). Over 301–312 the chain is Cytoplasmic; the sequence is FSTRKIDMVKSK. The chain crosses the membrane as a helical span at residues 313–333; sequence WGLALAAVVTVLSSLLMSVGL. The Lumenal segment spans residues 334-344; that stretch reads CTLFGLTPTLN. The chain crosses the membrane as a helical span at residues 345-365; it reads GGEIFPYLVVVIGLENVLVLT. At 366 to 401 the chain is on the cytoplasmic side; it reads KSVVSTPVDLEVKLRIAQGLSSESWSIMKNVATELG. The chain crosses the membrane as a helical span at residues 402-422; the sequence is IILIGYFTLVPAIQEFCLFAV. Position 423 (V423) is a topological domain, lumenal. Residues 424 to 444 form a helical membrane-spanning segment; that stretch reads GLVSDFFLQMFFFTTVLSIDI. Over 445–518 the chain is Cytoplasmic; the sequence is RRMELADLNK…FLARTRLAQR (74 aa). The ER export signal motif lies at 447–452; the sequence is MELADL. Glycyl lysine isopeptide (Lys-Gly) (interchain with G-Cter in ubiquitin) cross-links involve residues K454 and K466. Residues 519–539 traverse the membrane as a helical segment; sequence LIMAGTVVWIGILVYTDPAGL. The interval 535-710 is loop-7; it reads DPAGLRTYLA…QAHGDITLYK (176 aa). At 540–708 the chain is on the lumenal side; the sequence is RTYLAAQVTE…GTQAHGDITL (169 aa). Residues N590 and N641 are each glycosylated (N-linked (GlcNAc...) asparagine). A helical transmembrane segment spans residues 709–729; that stretch reads YKVAALGLAAGIVLVLLLLCL. The Cytoplasmic segment spans residues 730–1276; it reads YRVLCPRNYG…YVPSVLEKLD (547 aa). The tract at residues 731–1276 is interaction with SREBF2; sequence RVLCPRNYGQ…YVPSVLEKLD (546 aa). One copy of the WD 1 repeat lies at 771-811; sequence VLRGHLMDIECLASDGMLLVSCCLAGQVCVWDAQTGDCLTR. The interval 816–903 is disordered; the sequence is GSRRDSCGGG…RHRAGCGRAR (88 aa). S821, S837, S843, S850, S905, and S934 each carry phosphoserine. The segment at 928 to 957 is disordered; that stretch reads PALRPPSPGSPLPQASQEDGAAPEKGSPPL. WD repeat units lie at residues 949-999 and 1002-1039; these read APEK…LCCS and EVSS…SLSP. R1048 is subject to Omega-N-methylarginine. 4 WD repeats span residues 1074–1111, 1114–1152, 1155–1192, and 1194–1232; these read AHQK…CLFT, GHSG…RVSH, AHRG…KLYS, and QQDL…LLQT.

The protein belongs to the WD repeat SCAP family. As to quaternary structure, membrane region forms a homotetramer. Component of the SCAP-SREBP complex (composed of SCAP and SREBF1/SREBP1 or SREBF2/SREBP2); interacts with SREBF1/SREBP1 or SREBF2/SREBP2 through its C-terminal cytoplasmic domain. Forms a ternary complex with INSIG1 or INSIG2 through its transmembrane domains at high sterol concentrations. Interacts with PAQR3; the interaction anchors the SCAP-SREBP complex to the Golgi apparatus in low cholesterol conditions. Interacts with the SEC23-SEC24 complex in a SAR1-GTP-dependent manner through an ER export signal in its third cytoplasmic loop. Interacts with RNF139; the interaction inhibits the interaction of SCAP with SEC24B and hampering the ER to Golgi transport of the SCAP-SREBP complex. Interacts with SPRING. Post-translationally, ubiquitinated at Lys-454 and Lys-466. RNF145 triggers ubiquitination of SCAP, likely inhibiting SCAP-SREBP complex transport to the Golgi apparatus and the subsequent processing/maturation of SREBF2/SREBP2.

It localises to the endoplasmic reticulum membrane. It is found in the golgi apparatus membrane. Its subcellular location is the cytoplasmic vesicle. The protein resides in the COPII-coated vesicle membrane. Functionally, escort protein required for cholesterol as well as lipid homeostasis. Regulates export of the SCAP-SREBP complex from the endoplasmic reticulum to the Golgi upon low cholesterol, thereby regulating the processing of sterol regulatory element-binding proteins (SREBPs) SREBF1/SREBP1 and SREBF2/SREBP2. At high sterol concentrations, formation of a ternary complex with INSIG (INSIG1 or INSIG2) leads to mask the ER export signal in SCAP, promoting retention of the complex in the endoplasmic reticulum. Low sterol concentrations trigger release of INSIG, a conformational change in the SSD domain of SCAP, unmasking of the ER export signal, promoting recruitment into COPII-coated vesicles and transport of the SCAP-SREBP to the Golgi: in the Golgi, SREBPs are then processed, releasing the transcription factor fragment of SREBPs from the membrane, its import into the nucleus and up-regulation of LDLR, INSIG1 and the mevalonate pathway. Binds cholesterol via its SSD domain. The polypeptide is Sterol regulatory element-binding protein cleavage-activating protein (Cricetulus griseus (Chinese hamster)).